The following is a 226-amino-acid chain: 26S proteasome non-ATPase regulatory subunit 10 (226 aa).

The required for nuclear localization stretch occupies residues 1–37 (MEGCVSNLMVCNLAYSGKLEELKESILADKSLATRTD). The segment at 1–71 (MEGCVSNLMV…LGVPVNDKDD (71 aa)) is interaction with RB1. 7 ANK repeats span residues 3 to 36 (GCVS…ATRT), 37 to 69 (DQDS…VNDK), 70 to 102 (DDAG…VNAV), 103 to 135 (NQNG…PDAK), 136 to 168 (DHYE…TNIQ), 169 to 201 (DTEG…IYIE), and 202 to 226 (NKEE…MVEG). The interaction with RELA stretch occupies residues 39-226 (DSRTALHWAC…GLILKRMVEG (188 aa)). The segment at 171–226 (EGNTPLHLACDEERVEEAKLLVSQGASIYIENKEEKTPLQVAKGGLGLILKRMVEG) is interaction with RB1.

As to quaternary structure, part of transient complex containing PSMD10, PSMC4, PSMC5 and PAAF1 formed during the assembly of the 26S proteasome. Stays associated throughout the assembly of the PA700/19S RC and is released upon association with the 20S core. Interacts with PSMC4. Interacts with RB1. Interacts with CDK4. Interacts with MDM2. Interacts with RELA. Associates with a CDK4:CCND2 serine/threonine kinase complex. Interacts with ARHGDIA and increases the interaction between ARHGDIA and RHOA, hence promotes ARHGDIA inactivation of RHOA and ROCK. As to expression, tends to be up-regulated in cancer cells with RAS mutations, including lung cancers and adenocarconimas (at protein level).

Its subcellular location is the cytoplasm. It is found in the nucleus. In terms of biological role, acts as a chaperone during the assembly of the 26S proteasome, specifically of the PA700/19S regulatory complex (RC). In the initial step of the base subcomplex assembly is part of an intermediate PSMD10:PSMC4:PSMC5:PAAF1 module which probably assembles with a PSMD5:PSMC2:PSMC1:PSMD2 module. Independently of the proteasome, regulates EGF-induced AKT activation through inhibition of the RHOA/ROCK/PTEN pathway, leading to prolonged AKT activation. Plays an important role in RAS-induced tumorigenesis. Its function is as follows. Acts as an proto-oncoprotein by being involved in negative regulation of tumor suppressors RB1 and p53/TP53. Overexpression is leading to phosphorylation of RB1 and proteasomal degradation of RB1. Regulates CDK4-mediated phosphorylation of RB1 by competing with CDKN2A for binding with CDK4. Facilitates binding of MDM2 to p53/TP53 and the mono- and polyubiquitination of p53/TP53 by MDM2 suggesting a function in targeting the TP53:MDM2 complex to the 26S proteasome. Involved in p53-independent apoptosis. Involved in regulation of NF-kappa-B by retaining it in the cytoplasm. Binds to the NF-kappa-B component RELA and accelerates its XPO1/CRM1-mediated nuclear export. The sequence is that of 26S proteasome non-ATPase regulatory subunit 10 (PSMD10) from Homo sapiens (Human).